A 206-amino-acid chain; its full sequence is 2,3-bisphosphoglycerate-dependent phosphoglycerate mutase (206 aa).

Substrate contacts are provided by residues 9–16, 22–23, Arg-61, 88–91, Lys-99, 115–116, and 159–160; these read RHGQSEWN, TG, ERDY, RR, and GN. Catalysis depends on His-10, which acts as the Tele-phosphohistidine intermediate. The active-site Proton donor/acceptor is Glu-88.

This sequence belongs to the phosphoglycerate mutase family. BPG-dependent PGAM subfamily. Homodimer.

The catalysed reaction is (2R)-2-phosphoglycerate = (2R)-3-phosphoglycerate. Its pathway is carbohydrate degradation; glycolysis; pyruvate from D-glyceraldehyde 3-phosphate: step 3/5. Functionally, catalyzes the interconversion of 2-phosphoglycerate and 3-phosphoglycerate. The protein is 2,3-bisphosphoglycerate-dependent phosphoglycerate mutase of Bartonella bacilliformis (strain ATCC 35685 / KC583 / Herrer 020/F12,63).